A 236-amino-acid chain; its full sequence is SPbeta prophage-derived uncharacterized lipoprotein YokB (236 aa).

Positions 1–19 are cleaved as a signal peptide; sequence MNIRFSMLVCVSFIFFTGG. Cys20 carries the N-palmitoyl cysteine lipid modification. The S-diacylglycerol cysteine moiety is linked to residue Cys20. 2 disordered regions span residues 23–59 and 204–236; these read SSAN…TPNM and VKKV…KDNK. A compositionally biased stretch (basic and acidic residues) spans 31 to 53; sequence SKNKNESKEESSEEGVKENDNKL.

The protein localises to the cell membrane. The sequence is that of SPbeta prophage-derived uncharacterized lipoprotein YokB (yokB) from Bacillus subtilis (strain 168).